Reading from the N-terminus, the 729-residue chain is Phenylalanine ammonia-lyase (729 aa).

The active-site Proton donor/acceptor is the Y77. The segment at residues 182 to 184 (ASG) is a cross-link (5-imidazolinone (Ala-Gly)). The residue at position 183 (S183) is a 2,3-didehydroalanine (Ser). N241, Q336, R342, N372, K443, E471, and N474 together coordinate (E)-cinnamate.

This sequence belongs to the PAL/histidase family. Post-translationally, contains an active site 4-methylidene-imidazol-5-one (MIO), which is formed autocatalytically by cyclization and dehydration of residues Ala-Ser-Gly.

The protein localises to the cytoplasm. It catalyses the reaction L-phenylalanine = (E)-cinnamate + NH4(+). It participates in secondary metabolite biosynthesis. Its pathway is phenylpropanoid metabolism; trans-cinnamate biosynthesis; trans-cinnamate from L-phenylalanine: step 1/1. Its function is as follows. Phenylalanine ammonia-lyase; part of the gene cluster that mediates the biosynthesis of squalestatin S1 (SQS1, also known as zaragozic acid A), a heavily oxidized fungal polyketide that offers potent cholesterol lowering activity by targeting squalene synthase (SS). SQS1 is composed of a 2,8-dioxobicyclic[3.2.1]octane-3,4,5-tricarboxyclic acid core that is connected to two lipophilic polyketide arms. These initial steps feature the priming of an unusual benzoic acid starter unit onto the highly reducing polyketide synthase pks2, followed by oxaloacetate extension and product release to generate a tricarboxylic acid containing product. The phenylalanine ammonia lyase (PAL) M7 and the acyl-CoA ligase M9 are involved in transforming phenylalanine into benzoyl-CoA. The citrate synthase-like protein R3 is involved in connecting the C-alpha-carbons of the hexaketide chain and oxaloacetate to afford the tricarboxylic acid unit. The potential hydrolytic enzymes, M8 and M10, are in close proximity to pks2 and may participate in product release. On the other side, the tetraketide arm is synthesized by a the squalestatin tetraketide synthase pks1 and enzymatically esterified to the core in the last biosynthetic step, by the acetyltransferase M4. The biosynthesis of the tetraketide must involve 3 rounds of chain extension. After the first and second rounds methyl-transfer occurs, and in all rounds of extension the ketoreductase and dehydratase are active. The enoyl reductase and C-MeT of pks1 are not active in the final round of extension. The acetyltransferase M4 appears to have a broad substrate selectivity for its acyl CoA substrate, allowing the in vitro synthesis of novel squalestatins. The biosynthesis of SQS1 requires several oxidative steps likely performed by oxidoreductases M1, R1 and R2. Finally, in support of the identification of the cluster as being responsible for SQS1 production, the cluster contains a gene encoding a putative squalene synthase (SS) R6, suggesting a likely mechanism for self-resistance. This Phoma sp. (strain ATCC 20986 / MF5453) protein is Phenylalanine ammonia-lyase.